We begin with the raw amino-acid sequence, 360 residues long: LETM1 domain-containing protein 1 (360 aa).

The interval 1-110 (MALSRVCWAR…KKARRIKTNM (110 aa)) is required and sufficient for mitochondrial import. The Cytoplasmic portion of the chain corresponds to 1–137 (MALSRVCWAR…LRQFRRDVTK (137 aa)). A helical membrane pass occupies residues 138-158 (CLFLGILSIPPFANYLVFLLM). Residues 159–360 (YLFPRQLLIR…LSINYVGSRR (202 aa)) are Mitochondrial intermembrane-facing. The 175-residue stretch at 186–360 (LRKQSHPEIL…LSINYVGSRR (175 aa)) folds into the Letm1 RBD domain.

As to quaternary structure, interacts with BRI3BP. Interacts (via C-terminal) with SMARCA4; the interaction regulates transcriptional expression of thermogenic genes in brown adipose tissue.

It is found in the mitochondrion outer membrane. Its subcellular location is the nucleus. It localises to the mitochondrion inner membrane. Functionally, plays an essential role for mitochondrial structure and function, as well as thermogenesis of brown adipocytes. In brown adipose tissue also localizes in the nucleus where it interacts with the chromatin remodeler SMARCA4 to regulate thermogenic genes expression, such as UCP1. May regulate phagocytosis and inflammatory responses to lipopolysaccharide in macrophages. Involved in tumorigenesis and may function as a negative regulator of the p53/TP53. In Bos taurus (Bovine), this protein is LETM1 domain-containing protein 1.